Consider the following 411-residue polypeptide: tRNA pseudouridine synthase Pus10 (411 aa).

The 128-residue stretch at 65–192 (ALAKCHLPTR…SGQVKVVRNP (128 aa)) folds into the THUMP domain. The active-site Nucleophile is aspartate 244. Substrate is bound by residues tyrosine 305 and tyrosine 376.

It belongs to the pseudouridine synthase Pus10 family.

The catalysed reaction is uridine(54) in tRNA = pseudouridine(54) in tRNA. It catalyses the reaction uridine(55) in tRNA = pseudouridine(55) in tRNA. Its function is as follows. Responsible for synthesis of pseudouridine from uracil-54 and uracil-55 in the psi GC loop of transfer RNAs. The sequence is that of tRNA pseudouridine synthase Pus10 from Pyrobaculum arsenaticum (strain DSM 13514 / JCM 11321 / PZ6).